The primary structure comprises 161 residues: MEKIKEKLNSLKLESESWQEKYEELREQLKELEQSNTEKENEIKSLSAKNEQLDSEVEKLESQLSDTKQLAEDSNNLRSNNENYTKKNQDLEQQLEDSEAKLKEAMDKLKEADLNSEQMGRRIVALEEERDEWEKKCEEFQSKYEEAQKELDEIANSLENL.

A coiled-coil region spans residues 1–161 (MEKIKEKLNS…DEIANSLENL (161 aa)). Over residues 32–43 (LEQSNTEKENEI) the composition is skewed to basic and acidic residues. Residues 32-97 (LEQSNTEKEN…NQDLEQQLED (66 aa)) form a disordered region. S55 is subject to Phosphoserine. Positions 62–83 (SQLSDTKQLAEDSNNLRSNNEN) are enriched in polar residues. S116 and S157 each carry phosphoserine.

Homodimer.

It is found in the cytoplasm. Its subcellular location is the cytoskeleton. Involved in cell morphogenesis. Binds to F-actin and stabilizes the actin filaments. The chain is Tropomyosin-2 (TPM2) from Saccharomyces cerevisiae (strain ATCC 204508 / S288c) (Baker's yeast).